Consider the following 221-residue polypeptide: ATP-dependent dethiobiotin synthetase BioD (221 aa).

Position 12-17 (12-17 (EVGKTV)) interacts with ATP. A Mg(2+)-binding site is contributed by T16. Residue K39 is part of the active site. A substrate-binding site is contributed by T43. ATP contacts are provided by residues D47, 105-108 (EGLG), and 165-166 (SC). The Mg(2+) site is built by D47 and E105.

Belongs to the dethiobiotin synthetase family. In terms of assembly, homodimer. The cofactor is Mg(2+).

It is found in the cytoplasm. The enzyme catalyses (7R,8S)-7,8-diammoniononanoate + CO2 + ATP = (4R,5S)-dethiobiotin + ADP + phosphate + 3 H(+). It carries out the reaction (7R,8S)-8-amino-7-(carboxyamino)nonanoate + ATP = (4R,5S)-dethiobiotin + ADP + phosphate + H(+). Its pathway is cofactor biosynthesis; biotin biosynthesis; biotin from 7,8-diaminononanoate: step 1/2. Functionally, catalyzes a mechanistically unusual reaction, the ATP-dependent insertion of CO2 between the N7 and N8 nitrogen atoms of 7,8-diaminopelargonic acid (DAPA, also called 7,8-diammoniononanoate) to form a ureido ring. This cyanobacterium does not encode bioA (which catalyzes the formation of the precursor for this reaction in the cannonical pathway), instead it encodes bioU, which replaces bioA and also performs the first half of the cannonical BioD reaction. Thus in this organism BioD has a different substrate. The chain is ATP-dependent dethiobiotin synthetase BioD from Crocosphaera subtropica (strain ATCC 51142 / BH68) (Cyanothece sp. (strain ATCC 51142)).